The following is a 384-amino-acid chain: Organic solute transporter alpha-like protein 1 (384 aa).

The Extracellular portion of the chain corresponds to 1–38; it reads MEIVKTIIPHNRSYIEPPIPSATEWLANMSVMHVSCLT. N-linked (GlcNAc...) asparagine glycosylation is found at N11 and N28. A helical membrane pass occupies residues 39–59; it reads IACVFVAITFLSSFFHLFFVL. Residues 60 to 70 lie on the Cytoplasmic side of the membrane; it reads KYVSNERIRND. Residues 71-91 traverse the membrane as a helical segment; that stretch reads MYALIFMFPITTFASLVGMFI. Over 92-93 the chain is Extracellular; it reads PR. The chain crosses the membrane as a helical span at residues 94-114; that stretch reads AAIFLYAVSLVYFMFTLFIMV. Topologically, residues 115 to 165 are cytoplasmic; it reads TLLFNIFGGRQEMSAYLLQRNIRVNFTVPPLCFFKFLPTVESTDQNLRRIE. The chain crosses the membrane as a helical span at residues 166–186; it reads WLVFQTPIIRTLLELVSVVVS. At 187 to 202 the chain is on the extracellular side; that stretch reads MEQEGRRESVWFVFSQ. A helical transmembrane segment spans residues 203 to 223; that stretch reads LMALLSMCIAFYGCYVMVPLG. Residues 224–240 are Cytoplasmic-facing; that stretch reads REKHAPYRFDFLFRTCD. Residues 241-261 form a helical membrane-spanning segment; the sequence is IAQCIYTIQKFVFEFAAAVGL. The Extracellular portion of the chain corresponds to 262–273; the sequence is ITSDRYLPAAAK. The chain crosses the membrane as a helical span at residues 274-294; it reads ALWWASFMCTWEMMLLSALCS. Residues 295–384 lie on the Cytoplasmic side of the membrane; the sequence is YCLRPAKCKF…FDSLSQIQGQ (90 aa).

This sequence belongs to the OST-alpha family.

It localises to the cell membrane. Its function is as follows. Probable transporter. This Caenorhabditis elegans protein is Organic solute transporter alpha-like protein 1 (osta-1).